The following is a 170-amino-acid chain: MRRWGMAKIAVVSLGGAGTSIMREMLGIASDFDAYNVNERRTLKNARYFGYEEMEALAEELSGYDCIIFTAGLGSRSGDALVDLYGMLDGVRRLCFLVTPFYFEIERLMRSRAQLGKIMTEDFEGAVLTLNSLLRDMEEAEPSKSKLEKLVRRFDREVASLIVEMMQEVR.

This is an uncharacterized protein from Archaeoglobus fulgidus (strain ATCC 49558 / DSM 4304 / JCM 9628 / NBRC 100126 / VC-16).